We begin with the raw amino-acid sequence, 476 residues long: 3-isopropylmalate dehydratase large subunit (476 aa).

Residues cysteine 353, cysteine 413, and cysteine 416 each contribute to the [4Fe-4S] cluster site.

Belongs to the aconitase/IPM isomerase family. LeuC type 1 subfamily. As to quaternary structure, heterodimer of LeuC and LeuD. Requires [4Fe-4S] cluster as cofactor.

The enzyme catalyses (2R,3S)-3-isopropylmalate = (2S)-2-isopropylmalate. It functions in the pathway amino-acid biosynthesis; L-leucine biosynthesis; L-leucine from 3-methyl-2-oxobutanoate: step 2/4. Functionally, catalyzes the isomerization between 2-isopropylmalate and 3-isopropylmalate, via the formation of 2-isopropylmaleate. This chain is 3-isopropylmalate dehydratase large subunit, found in Yersinia enterocolitica serotype O:8 / biotype 1B (strain NCTC 13174 / 8081).